We begin with the raw amino-acid sequence, 280 residues long: UPF0276 protein NMB2142 (280 aa).

This sequence belongs to the UPF0276 family.

The chain is UPF0276 protein NMB2142 from Neisseria meningitidis serogroup B (strain ATCC BAA-335 / MC58).